A 424-amino-acid polypeptide reads, in one-letter code: Serine--tRNA ligase (424 aa).

231-233 (TAE) is an L-serine binding site. Residue 262-264 (RSE) coordinates ATP. Glutamate 285 is an L-serine binding site. ATP is bound at residue 349–352 (EISS). L-serine is bound at residue serine 385.

The protein belongs to the class-II aminoacyl-tRNA synthetase family. Type-1 seryl-tRNA synthetase subfamily. As to quaternary structure, homodimer. The tRNA molecule binds across the dimer.

Its subcellular location is the cytoplasm. It carries out the reaction tRNA(Ser) + L-serine + ATP = L-seryl-tRNA(Ser) + AMP + diphosphate + H(+). The catalysed reaction is tRNA(Sec) + L-serine + ATP = L-seryl-tRNA(Sec) + AMP + diphosphate + H(+). It functions in the pathway aminoacyl-tRNA biosynthesis; selenocysteinyl-tRNA(Sec) biosynthesis; L-seryl-tRNA(Sec) from L-serine and tRNA(Sec): step 1/1. Its function is as follows. Catalyzes the attachment of serine to tRNA(Ser). Is also able to aminoacylate tRNA(Sec) with serine, to form the misacylated tRNA L-seryl-tRNA(Sec), which will be further converted into selenocysteinyl-tRNA(Sec). In Bacillus pumilus (strain SAFR-032), this protein is Serine--tRNA ligase.